The primary structure comprises 834 residues: Protein translocase subunit SecA (834 aa).

ATP contacts are provided by residues glutamine 85, 103 to 107 (GEGKT), and aspartate 491. 4 residues coordinate Zn(2+): cysteine 818, cysteine 820, cysteine 829, and cysteine 830.

This sequence belongs to the SecA family. In terms of assembly, monomer and homodimer. Part of the essential Sec protein translocation apparatus which comprises SecA, SecYEG and auxiliary proteins SecDF. Other proteins may also be involved. Zn(2+) is required as a cofactor.

The protein localises to the cell membrane. The protein resides in the cytoplasm. The catalysed reaction is ATP + H2O + cellular proteinSide 1 = ADP + phosphate + cellular proteinSide 2.. Functionally, part of the Sec protein translocase complex. Interacts with the SecYEG preprotein conducting channel. Has a central role in coupling the hydrolysis of ATP to the transfer of proteins into and across the cell membrane, serving as an ATP-driven molecular motor driving the stepwise translocation of polypeptide chains across the membrane. The chain is Protein translocase subunit SecA from Clostridium kluyveri (strain ATCC 8527 / DSM 555 / NBRC 12016 / NCIMB 10680 / K1).